A 193-amino-acid chain; its full sequence is MVSKIMNKKYEKGLSLIESAMVLALAATVTAGVMFYYQSASDSNKSQNAISEVMSATSAINGLYIGQTSYSGLDSTILLNTSAIPDNYKDTTNKKITNPFGGELNVGPANNNTAFGYYLTLTRLDKAACVSLATLNLGTSAKGYGVNISSENNITSFGNSADQAAKSTAITPAEAATACKNTDSTNKVTYFMK.

The propeptide occupies 1–13 (MVSKIMNKKYEKG). Residue L14 is modified to N-methylleucine. Residues 14–35 (LSLIESAMVLALAATVTAGVMF) form a helical membrane-spanning segment. C129 and C179 are joined by a disulfide.

Belongs to the N-Me-Phe pilin family. 10 to 100 laterally aligned filaments or bundle-forming pili coalesce into rope-like bundles. These form linkages between the bacteria within the enteropathogenic E.coli (EPEC) microcolonies that are attached to epithelial cells.

Its subcellular location is the fimbrium. The protein resides in the membrane. Its function is as follows. Major repeating bundle-forming pilus (BFP) subunit. Is required for EPEC localized adherence. This Escherichia coli O111:H- protein is Major structural subunit of bundle-forming pilus (bfpA).